A 92-amino-acid polypeptide reads, in one-letter code: Conotoxin Ac8.1 (92 aa).

A signal peptide spans 1–19 (LKMGAMFVLLLLFTLASSQ). Residues 20-44 (QEGDVQARKTSLKSDFYRALRQYDR) constitute a propeptide that is removed on maturation. Pyrrolidone carboxylic acid is present on Gln-45.

This sequence belongs to the conotoxin S superfamily. Post-translationally, contains 5 disulfide bonds. Expressed by the venom duct.

Its subcellular location is the secreted. This chain is Conotoxin Ac8.1, found in Conus achatinus (Little frog cone).